We begin with the raw amino-acid sequence, 1106 residues long: Probable NAD-specific glutamate dehydrogenase (1106 aa).

Lys654 is an active-site residue.

The protein belongs to the Glu/Leu/Phe/Val dehydrogenases family. As to quaternary structure, homotetramer.

The protein resides in the cytoplasm. It catalyses the reaction L-glutamate + NAD(+) + H2O = 2-oxoglutarate + NH4(+) + NADH + H(+). In terms of biological role, NAD(+)-dependent glutamate dehydrogenase which degrades glutamate to ammonia and alpha-ketoglutarate. The sequence is that of Probable NAD-specific glutamate dehydrogenase (gdh2) from Schizosaccharomyces pombe (strain 972 / ATCC 24843) (Fission yeast).